A 227-amino-acid chain; its full sequence is Uracil-DNA glycosylase 2 (227 aa).

D67 (proton acceptor) is an active-site residue.

Belongs to the uracil-DNA glycosylase (UDG) superfamily. UNG family.

It is found in the cytoplasm. It carries out the reaction Hydrolyzes single-stranded DNA or mismatched double-stranded DNA and polynucleotides, releasing free uracil.. Functionally, excises uracil residues from the DNA which can arise as a result of misincorporation of dUMP residues by DNA polymerase or due to deamination of cytosine. This Streptomyces avermitilis (strain ATCC 31267 / DSM 46492 / JCM 5070 / NBRC 14893 / NCIMB 12804 / NRRL 8165 / MA-4680) protein is Uracil-DNA glycosylase 2 (ung2).